A 360-amino-acid polypeptide reads, in one-letter code: Phosphoserine aminotransferase (360 aa).

Arg-42 is an L-glutamate binding site. Pyridoxal 5'-phosphate is bound by residues 76-77, Trp-102, Thr-152, Asp-171, and Gln-194; that span reads AS. Residue Lys-195 is modified to N6-(pyridoxal phosphate)lysine. 236–237 is a pyridoxal 5'-phosphate binding site; that stretch reads NT.

This sequence belongs to the class-V pyridoxal-phosphate-dependent aminotransferase family. SerC subfamily. As to quaternary structure, homodimer. It depends on pyridoxal 5'-phosphate as a cofactor.

Its subcellular location is the cytoplasm. The enzyme catalyses O-phospho-L-serine + 2-oxoglutarate = 3-phosphooxypyruvate + L-glutamate. It carries out the reaction 4-(phosphooxy)-L-threonine + 2-oxoglutarate = (R)-3-hydroxy-2-oxo-4-phosphooxybutanoate + L-glutamate. The protein operates within amino-acid biosynthesis; L-serine biosynthesis; L-serine from 3-phospho-D-glycerate: step 2/3. Catalyzes the reversible conversion of 3-phosphohydroxypyruvate to phosphoserine and of 3-hydroxy-2-oxo-4-phosphonooxybutanoate to phosphohydroxythreonine. The polypeptide is Phosphoserine aminotransferase (Geobacillus kaustophilus (strain HTA426)).